A 165-amino-acid chain; its full sequence is Thiol peroxidase (165 aa).

In terms of domain architecture, Thioredoxin spans 18 to 165 (PAVGSPAPAF…YEAALAALGA (148 aa)). Cys60 functions as the Cysteine sulfenic acid (-SOH) intermediate in the catalytic mechanism. A disulfide bridge links Cys60 with Cys93.

The protein belongs to the peroxiredoxin family. Tpx subfamily. In terms of assembly, homodimer.

It catalyses the reaction a hydroperoxide + [thioredoxin]-dithiol = an alcohol + [thioredoxin]-disulfide + H2O. Its function is as follows. Thiol-specific peroxidase that catalyzes the reduction of hydrogen peroxide and organic hydroperoxides to water and alcohols, respectively. Plays a role in cell protection against oxidative stress by detoxifying peroxides. In Mycobacterium bovis (strain ATCC BAA-935 / AF2122/97), this protein is Thiol peroxidase.